Reading from the N-terminus, the 303-residue chain is Oxygen-dependent coproporphyrinogen-III oxidase (303 aa).

A substrate-binding site is contributed by Ser-94. The a divalent metal cation site is built by His-98 and His-108. Catalysis depends on His-108, which acts as the Proton donor. Residue 110–112 participates in substrate binding; the sequence is NVR. A divalent metal cation is bound by residues His-147 and His-177. The important for dimerization stretch occupies residues 242 to 277; it reads YVEFNLVYDRGTLFGLQTGGRTESILMSLPPLVRWE. Residue 260-262 participates in substrate binding; it reads GGR.

The protein belongs to the aerobic coproporphyrinogen-III oxidase family. In terms of assembly, homodimer. Requires a divalent metal cation as cofactor.

Its subcellular location is the cytoplasm. The catalysed reaction is coproporphyrinogen III + O2 + 2 H(+) = protoporphyrinogen IX + 2 CO2 + 2 H2O. Its pathway is porphyrin-containing compound metabolism; protoporphyrin-IX biosynthesis; protoporphyrinogen-IX from coproporphyrinogen-III (O2 route): step 1/1. Its function is as follows. Involved in the heme biosynthesis. Catalyzes the aerobic oxidative decarboxylation of propionate groups of rings A and B of coproporphyrinogen-III to yield the vinyl groups in protoporphyrinogen-IX. The protein is Oxygen-dependent coproporphyrinogen-III oxidase of Saccharophagus degradans (strain 2-40 / ATCC 43961 / DSM 17024).